The chain runs to 366 residues: NAD(P)H-quinone oxidoreductase subunit 1, chloroplastic (366 aa).

The next 7 helical transmembrane spans lie at 28-48 (IWLL…VLVI), 105-125 (IAVI…HLVL), 128-148 (LSIG…GLLM), 250-270 (SGIK…VSSL), 271-291 (FVTV…FIFI), 303-323 (IFGM…FLFI), and 346-366 (FLLP…LLSL).

It belongs to the complex I subunit 1 family. As to quaternary structure, NDH is composed of at least 16 different subunits, 5 of which are encoded in the nucleus.

It is found in the plastid. The protein resides in the chloroplast thylakoid membrane. It carries out the reaction a plastoquinone + NADH + (n+1) H(+)(in) = a plastoquinol + NAD(+) + n H(+)(out). It catalyses the reaction a plastoquinone + NADPH + (n+1) H(+)(in) = a plastoquinol + NADP(+) + n H(+)(out). Its function is as follows. NDH shuttles electrons from NAD(P)H:plastoquinone, via FMN and iron-sulfur (Fe-S) centers, to quinones in the photosynthetic chain and possibly in a chloroplast respiratory chain. The immediate electron acceptor for the enzyme in this species is believed to be plastoquinone. Couples the redox reaction to proton translocation, and thus conserves the redox energy in a proton gradient. The protein is NAD(P)H-quinone oxidoreductase subunit 1, chloroplastic of Nandina domestica (Heavenly bamboo).